The sequence spans 216 residues: Protein Syd (216 aa).

Belongs to the Syd family.

It localises to the cell inner membrane. Functionally, interacts with the SecY protein in vivo. May bind preferentially to an uncomplexed state of SecY, thus functioning either as a chelating agent for excess SecY in the cell or as a regulatory factor that negatively controls the translocase function. This is Protein Syd from Shewanella sp. (strain MR-7).